A 117-amino-acid chain; its full sequence is Large ribosomal subunit protein bL20 (117 aa).

The protein belongs to the bacterial ribosomal protein bL20 family.

In terms of biological role, binds directly to 23S ribosomal RNA and is necessary for the in vitro assembly process of the 50S ribosomal subunit. It is not involved in the protein synthesizing functions of that subunit. The polypeptide is Large ribosomal subunit protein bL20 (Magnetococcus marinus (strain ATCC BAA-1437 / JCM 17883 / MC-1)).